A 101-amino-acid chain; its full sequence is RNA-binding protein Hfq (101 aa).

The Sm domain occupies D9 to V68. Residues V63–E101 form a disordered region. Residues H70–N86 are compositionally biased toward polar residues.

Belongs to the Hfq family. Homohexamer.

Its function is as follows. RNA chaperone that binds small regulatory RNA (sRNAs) and mRNAs to facilitate mRNA translational regulation in response to envelope stress, environmental stress and changes in metabolite concentrations. Also binds with high specificity to tRNAs. This is RNA-binding protein Hfq from Yersinia pseudotuberculosis serotype O:1b (strain IP 31758).